The chain runs to 318 residues: E3 ubiquitin-protein ligase NRDP1 (318 aa).

The RING-type; degenerate zinc finger occupies C18–R57. Residues K78–L138 form an SIAH-type; degenerate zinc finger.

It carries out the reaction S-ubiquitinyl-[E2 ubiquitin-conjugating enzyme]-L-cysteine + [acceptor protein]-L-lysine = [E2 ubiquitin-conjugating enzyme]-L-cysteine + N(6)-ubiquitinyl-[acceptor protein]-L-lysine.. It functions in the pathway protein modification; protein ubiquitination. Its function is as follows. Acts as E3 ubiquitin-protein ligase and regulates the degradation of target proteins. This chain is E3 ubiquitin-protein ligase NRDP1 (rnf41), found in Danio rerio (Zebrafish).